The following is a 330-amino-acid chain: Endochitinase Ziz m 1.0101 (330 aa).

An N-terminal signal peptide occupies residues 1–24 (MVPQAKLVVASLILTSALIQTSEA). Positions 26 to 330 (GGIATYWGQY…LRTKFMYQNA (305 aa)) constitute a GH18 domain. 3 cysteine pairs are disulfide-bonded: Cys47/Cys90, Cys77/Cys80, and Cys187/Cys219. The segment at 72–86 (NISGHCSDCTFLGEE) is binds to IgE in 70% of the 10 patients tested allergic to Indian jujube and latex. Residues 292–301 (VWNRYYDLKT) are binds to IgE in 100% of the 10 patients tested allergic to Indian jujube and latex; sufficient for prediction of the presence of allergic reactions in these patients. 2 binds to IgE in 70% of the 10 patients tested allergic to Indian jujube and latex regions span residues 300 to 311 (KTNYSSSIILEY) and 309 to 320 (LEYVNSGTKYLP).

It belongs to the glycosyl hydrolase 18 family. Chitinase class II subfamily.

It is found in the secreted. The enzyme catalyses Random endo-hydrolysis of N-acetyl-beta-D-glucosaminide (1-&gt;4)-beta-linkages in chitin and chitodextrins.. Defense against chitin containing fungal pathogens. The sequence is that of Endochitinase Ziz m 1.0101 from Ziziphus mauritiana (Indian jujube).